The sequence spans 177 residues: Large ribosomal subunit protein uL22 (177 aa).

Residues 118–177 (VESRPSREGRRGGAGESAGGARARRAQGSKAAAAKKAPASSSTKAATTTEASEEAKGGSQ) form a disordered region. Basic and acidic residues predominate over residues 121-130 (RPSREGRRGG). Residues 145–167 (GSKAAAAKKAPASSSTKAATTTE) are compositionally biased toward low complexity.

It belongs to the universal ribosomal protein uL22 family. Part of the 50S ribosomal subunit.

Its function is as follows. This protein binds specifically to 23S rRNA; its binding is stimulated by other ribosomal proteins, e.g. L4, L17, and L20. It is important during the early stages of 50S assembly. It makes multiple contacts with different domains of the 23S rRNA in the assembled 50S subunit and ribosome. In terms of biological role, the globular domain of the protein is located near the polypeptide exit tunnel on the outside of the subunit, while an extended beta-hairpin is found that lines the wall of the exit tunnel in the center of the 70S ribosome. This is Large ribosomal subunit protein uL22 from Mycobacterium sp. (strain JLS).